A 251-amino-acid chain; its full sequence is B3 domain-containing protein REM7 (251 aa).

2 consecutive DNA-binding regions (TF-B3) follow at residues 11-103 and 170-251; these read NSHF…LGPS and CFVA…SRLN.

The protein localises to the nucleus. The chain is B3 domain-containing protein REM7 (REM7) from Arabidopsis thaliana (Mouse-ear cress).